Reading from the N-terminus, the 334-residue chain is Holliday junction branch migration complex subunit RuvB (334 aa).

The segment at 1–182 is large ATPase domain (RuvB-L); that stretch reads MDERLVSSEL…FGVLSRLEYY (182 aa). ATP contacts are provided by residues leucine 21, arginine 22, glycine 63, lysine 66, threonine 67, threonine 68, 129-131, arginine 172, tyrosine 182, and arginine 219; that span reads EDF. Threonine 67 contacts Mg(2+). A small ATPAse domain (RuvB-S) region spans residues 183 to 253; the sequence is TRDELSEIVI…VAVDALERLQ (71 aa). The head domain (RuvB-H) stretch occupies residues 256 to 334; sequence KLGLDHIDRK…HFKMEVPNHD (79 aa). Arginine 311 and arginine 316 together coordinate DNA.

It belongs to the RuvB family. Homohexamer. Forms an RuvA(8)-RuvB(12)-Holliday junction (HJ) complex. HJ DNA is sandwiched between 2 RuvA tetramers; dsDNA enters through RuvA and exits via RuvB. An RuvB hexamer assembles on each DNA strand where it exits the tetramer. Each RuvB hexamer is contacted by two RuvA subunits (via domain III) on 2 adjacent RuvB subunits; this complex drives branch migration. In the full resolvosome a probable DNA-RuvA(4)-RuvB(12)-RuvC(2) complex forms which resolves the HJ.

The protein resides in the cytoplasm. The catalysed reaction is ATP + H2O = ADP + phosphate + H(+). The RuvA-RuvB-RuvC complex processes Holliday junction (HJ) DNA during genetic recombination and DNA repair, while the RuvA-RuvB complex plays an important role in the rescue of blocked DNA replication forks via replication fork reversal (RFR). RuvA specifically binds to HJ cruciform DNA, conferring on it an open structure. The RuvB hexamer acts as an ATP-dependent pump, pulling dsDNA into and through the RuvAB complex. RuvB forms 2 homohexamers on either side of HJ DNA bound by 1 or 2 RuvA tetramers; 4 subunits per hexamer contact DNA at a time. Coordinated motions by a converter formed by DNA-disengaged RuvB subunits stimulates ATP hydrolysis and nucleotide exchange. Immobilization of the converter enables RuvB to convert the ATP-contained energy into a lever motion, pulling 2 nucleotides of DNA out of the RuvA tetramer per ATP hydrolyzed, thus driving DNA branch migration. The RuvB motors rotate together with the DNA substrate, which together with the progressing nucleotide cycle form the mechanistic basis for DNA recombination by continuous HJ branch migration. Branch migration allows RuvC to scan DNA until it finds its consensus sequence, where it cleaves and resolves cruciform DNA. This chain is Holliday junction branch migration complex subunit RuvB, found in Bacillus licheniformis (strain ATCC 14580 / DSM 13 / JCM 2505 / CCUG 7422 / NBRC 12200 / NCIMB 9375 / NCTC 10341 / NRRL NRS-1264 / Gibson 46).